The chain runs to 860 residues: Leucine--tRNA ligase (860 aa).

The 'HIGH' region motif lies at proline 42 to histidine 52. A 'KMSKS' region motif is present at residues lysine 619 to serine 623. Lysine 622 contacts ATP.

Belongs to the class-I aminoacyl-tRNA synthetase family.

It localises to the cytoplasm. It carries out the reaction tRNA(Leu) + L-leucine + ATP = L-leucyl-tRNA(Leu) + AMP + diphosphate. The protein is Leucine--tRNA ligase of Shigella sonnei (strain Ss046).